We begin with the raw amino-acid sequence, 668 residues long: DNA ligase (668 aa).

Residues 34 to 38 (DAEYD), 83 to 84 (SL), and glutamate 117 contribute to the NAD(+) site. Lysine 119 (N6-AMP-lysine intermediate) is an active-site residue. The NAD(+) site is built by arginine 140, glutamate 177, lysine 293, and lysine 317. Positions 411, 414, 429, and 434 each coordinate Zn(2+). The region spanning 591 to 668 (RVGGRFTGKT…SEDDFLELMQ (78 aa)) is the BRCT domain.

This sequence belongs to the NAD-dependent DNA ligase family. LigA subfamily. Mg(2+) is required as a cofactor. Requires Mn(2+) as cofactor.

The enzyme catalyses NAD(+) + (deoxyribonucleotide)n-3'-hydroxyl + 5'-phospho-(deoxyribonucleotide)m = (deoxyribonucleotide)n+m + AMP + beta-nicotinamide D-nucleotide.. In terms of biological role, DNA ligase that catalyzes the formation of phosphodiester linkages between 5'-phosphoryl and 3'-hydroxyl groups in double-stranded DNA using NAD as a coenzyme and as the energy source for the reaction. It is essential for DNA replication and repair of damaged DNA. The protein is DNA ligase of Citrifermentans bemidjiense (strain ATCC BAA-1014 / DSM 16622 / JCM 12645 / Bem) (Geobacter bemidjiensis).